Consider the following 296-residue polypeptide: MAMVEMQTTAALAESRRKMQARRRLKNRIALTLSMATMAFGLFWLIWILMSTITRGIDGMSLALFTEMTPPPNTEGGGLANALAGSGLLILWATVFGTPLGIMAGIYLAEYGRKSWLAEVIRFINDILLSAPSIVVGLFVYTIVVAQMEHFSGWAGVIALALLQVPIVIRTTENMLKLVPYSLREAAYALGTPKWKMISAITLKASVSGIMTGILLAIARIAGETAPLLFTALSNQFWSTDMMQPIANLPVTIFKFAMSPFAEWQQLAWAGVLIITLCVLLLNILARVVFAKNKHG.

Residues 1–28 lie on the Cytoplasmic side of the membrane; it reads MAMVEMQTTAALAESRRKMQARRRLKNR. Residues 29-50 form a helical membrane-spanning segment; it reads IALTLSMATMAFGLFWLIWILM. The Periplasmic segment spans residues 51–82; sequence STITRGIDGMSLALFTEMTPPPNTEGGGLANA. The chain crosses the membrane as a helical span at residues 83-102; that stretch reads LAGSGLLILWATVFGTPLGI. The region spanning 83–286 is the ABC transmembrane type-1 domain; sequence LAGSGLLILW…LCVLLLNILA (204 aa). The Cytoplasmic segment spans residues 103-126; it reads MAGIYLAEYGRKSWLAEVIRFIND. A helical membrane pass occupies residues 127–146; that stretch reads ILLSAPSIVVGLFVYTIVVA. Over 147-150 the chain is Periplasmic; it reads QMEH. Residues 151–169 traverse the membrane as a helical segment; it reads FSGWAGVIALALLQVPIVI. The Cytoplasmic portion of the chain corresponds to 170-204; the sequence is RTTENMLKLVPYSLREAAYALGTPKWKMISAITLK. The chain crosses the membrane as a helical span at residues 205–223; it reads ASVSGIMTGILLAIARIAG. The Periplasmic segment spans residues 224 to 266; it reads ETAPLLFTALSNQFWSTDMMQPIANLPVTIFKFAMSPFAEWQQ. A helical membrane pass occupies residues 267-286; the sequence is LAWAGVLIITLCVLLLNILA. At 287–296 the chain is on the cytoplasmic side; that stretch reads RVVFAKNKHG.

This sequence belongs to the binding-protein-dependent transport system permease family. CysTW subfamily.

It is found in the cell inner membrane. Its function is as follows. Part of the binding-protein-dependent transport system for phosphate; probably responsible for the translocation of the substrate across the membrane. The sequence is that of Phosphate transport system permease protein PstA (pstA) from Escherichia coli (strain K12).